A 162-amino-acid polypeptide reads, in one-letter code: MADPDRYNKMFPVSWEQLHRDTRALSWRLMERGPFKGIVAITRGGLVPAAILARELEVRLVDTICIASYDWKSQGGISVLKGVEGDGEGWLIVDDLVDTGTTARAVREMLPKAHFATVYAKPSGRPVVDTYITEVSQDTWILFPWDSEIQYVQPLVNRRQEG.

Residues 43–44 (RG) and 94–102 (DDLVDTGTT) each bind 5-phospho-alpha-D-ribose 1-diphosphate. Asp-95 contacts Mg(2+). Guanine contacts are provided by Asp-98 and Ile-141. 2 residues coordinate xanthine: Asp-98 and Ile-141. GMP is bound by residues 98–102 (DTGTT) and 140–141 (WI).

This sequence belongs to the purine/pyrimidine phosphoribosyltransferase family. XGPT subfamily. In terms of assembly, homotetramer. Mg(2+) serves as cofactor.

It is found in the cell inner membrane. It catalyses the reaction GMP + diphosphate = guanine + 5-phospho-alpha-D-ribose 1-diphosphate. The enzyme catalyses XMP + diphosphate = xanthine + 5-phospho-alpha-D-ribose 1-diphosphate. It carries out the reaction IMP + diphosphate = hypoxanthine + 5-phospho-alpha-D-ribose 1-diphosphate. The protein operates within purine metabolism; GMP biosynthesis via salvage pathway; GMP from guanine: step 1/1. Its pathway is purine metabolism; XMP biosynthesis via salvage pathway; XMP from xanthine: step 1/1. Functionally, purine salvage pathway enzyme that catalyzes the transfer of the ribosyl-5-phosphate group from 5-phospho-alpha-D-ribose 1-diphosphate (PRPP) to the N9 position of the 6-oxopurines guanine and xanthine to form the corresponding ribonucleotides GMP (guanosine 5'-monophosphate) and XMP (xanthosine 5'-monophosphate), with the release of PPi. To a lesser extent, also acts on hypoxanthine. In Oleidesulfovibrio alaskensis (strain ATCC BAA-1058 / DSM 17464 / G20) (Desulfovibrio alaskensis), this protein is Xanthine-guanine phosphoribosyltransferase.